The sequence spans 101 residues: Small ribosomal subunit protein uS14 (101 aa).

The protein belongs to the universal ribosomal protein uS14 family. As to quaternary structure, part of the 30S ribosomal subunit. Contacts proteins S3 and S10.

Functionally, binds 16S rRNA, required for the assembly of 30S particles and may also be responsible for determining the conformation of the 16S rRNA at the A site. The chain is Small ribosomal subunit protein uS14 from Tropheryma whipplei (strain TW08/27) (Whipple's bacillus).